Reading from the N-terminus, the 294-residue chain is tRNA pseudouridine synthase B (294 aa).

Asp-39 serves as the catalytic Nucleophile.

This sequence belongs to the pseudouridine synthase TruB family. Type 1 subfamily.

It catalyses the reaction uridine(55) in tRNA = pseudouridine(55) in tRNA. Functionally, responsible for synthesis of pseudouridine from uracil-55 in the psi GC loop of transfer RNAs. This chain is tRNA pseudouridine synthase B, found in Streptococcus pyogenes serotype M3 (strain ATCC BAA-595 / MGAS315).